The chain runs to 338 residues: Ketol-acid reductoisomerase (NADP(+)) (338 aa).

The 181-residue stretch at 1–181 (MKVSYDKDCD…GGGRTGIIET (181 aa)) folds into the KARI N-terminal Rossmann domain. NADP(+) contacts are provided by residues 24 to 27 (YGSQ), Arg47, Ser50, Ser52, and 82 to 85 (DEFQ). His107 is an active-site residue. NADP(+) is bound at residue Gly133. Residues 182–327 (TFKDETETDL…EKLRAMMPWI (146 aa)) enclose the KARI C-terminal knotted domain. Asp190, Glu194, Glu226, and Glu230 together coordinate Mg(2+). A substrate-binding site is contributed by Ser251.

It belongs to the ketol-acid reductoisomerase family. The cofactor is Mg(2+).

The catalysed reaction is (2R)-2,3-dihydroxy-3-methylbutanoate + NADP(+) = (2S)-2-acetolactate + NADPH + H(+). The enzyme catalyses (2R,3R)-2,3-dihydroxy-3-methylpentanoate + NADP(+) = (S)-2-ethyl-2-hydroxy-3-oxobutanoate + NADPH + H(+). The protein operates within amino-acid biosynthesis; L-isoleucine biosynthesis; L-isoleucine from 2-oxobutanoate: step 2/4. It participates in amino-acid biosynthesis; L-valine biosynthesis; L-valine from pyruvate: step 2/4. Involved in the biosynthesis of branched-chain amino acids (BCAA). Catalyzes an alkyl-migration followed by a ketol-acid reduction of (S)-2-acetolactate (S2AL) to yield (R)-2,3-dihydroxy-isovalerate. In the isomerase reaction, S2AL is rearranged via a Mg-dependent methyl migration to produce 3-hydroxy-3-methyl-2-ketobutyrate (HMKB). In the reductase reaction, this 2-ketoacid undergoes a metal-dependent reduction by NADPH to yield (R)-2,3-dihydroxy-isovalerate. The polypeptide is Ketol-acid reductoisomerase (NADP(+)) (Stutzerimonas stutzeri (strain A1501) (Pseudomonas stutzeri)).